We begin with the raw amino-acid sequence, 958 residues long: Atromentin synthetase greA (958 aa).

Residues Ser-60 to Val-465 form an adenylation (A) domain region. Positions Ala-597–Leu-675 constitute a Carrier domain. The thiolation and peptide carrier (T) domain stretch occupies residues Thr-602–Asn-672. Ser-634 is modified (O-(pantetheine 4'-phosphoryl)serine). The segment at Pro-698–Gln-946 is thioesterase (TE) domain.

It belongs to the ATP-dependent AMP-binding enzyme family.

Its pathway is secondary metabolite biosynthesis. An L-tyrosine:2-oxoglutarate aminotransferase and atromentin synthetase greA catalyze consecutive steps to turn over L-tyrosine into atromentin, which represents the generic precursor molecule for the entire terphenylquinone and pulvinic acid family of pigments, which are widely distributed secondary metabolites in homobasidiomycetes. The first step catalyzed by the aminotransferase converts L-tyrosine in to 4-hydroxyphenylpyruvate (4-HPP). Adenylation of two 4-HPP monomers by the greA adenylation (A) domain, covalent tethering of the monomers as a thioester and oxoester onto the greA thiolation (T) and thioesterase (TE) domains, respectively, and symmetric C-C-bond formation between two monomers catalyzed by the greA TE domain leads to atromentin. This is Atromentin synthetase greA (greA) from Suillus grevillei (Larch bolete).